The primary structure comprises 267 residues: NAD kinase 2 (267 aa).

D50 functions as the Proton acceptor in the catalytic mechanism. Residues 50-51 (DG), K55, 122-123 (NE), R149, D151, 162-167 (TAYNKS), and A186 each bind NAD(+).

The protein belongs to the NAD kinase family. It depends on a divalent metal cation as a cofactor.

It localises to the cytoplasm. The enzyme catalyses NAD(+) + ATP = ADP + NADP(+) + H(+). Involved in the regulation of the intracellular balance of NAD and NADP, and is a key enzyme in the biosynthesis of NADP. Catalyzes specifically the phosphorylation on 2'-hydroxyl of the adenosine moiety of NAD to yield NADP. This chain is NAD kinase 2, found in Listeria monocytogenes serovar 1/2a (strain ATCC BAA-679 / EGD-e).